We begin with the raw amino-acid sequence, 138 residues long: Nucleoside diphosphate kinase (138 aa).

Positions 9, 57, 85, 91, 102, and 112 each coordinate ATP. His115 functions as the Pros-phosphohistidine intermediate in the catalytic mechanism.

Belongs to the NDK family. Homotetramer. The cofactor is Mg(2+).

Its subcellular location is the cytoplasm. The enzyme catalyses a 2'-deoxyribonucleoside 5'-diphosphate + ATP = a 2'-deoxyribonucleoside 5'-triphosphate + ADP. It carries out the reaction a ribonucleoside 5'-diphosphate + ATP = a ribonucleoside 5'-triphosphate + ADP. Major role in the synthesis of nucleoside triphosphates other than ATP. The ATP gamma phosphate is transferred to the NDP beta phosphate via a ping-pong mechanism, using a phosphorylated active-site intermediate. This is Nucleoside diphosphate kinase from Deinococcus radiodurans (strain ATCC 13939 / DSM 20539 / JCM 16871 / CCUG 27074 / LMG 4051 / NBRC 15346 / NCIMB 9279 / VKM B-1422 / R1).